The following is a 251-amino-acid chain: Ubiquinone/menaquinone biosynthesis C-methyltransferase UbiE (251 aa).

Residues T74, D95, 123–124 (NA), and S140 each bind S-adenosyl-L-methionine.

Belongs to the class I-like SAM-binding methyltransferase superfamily. MenG/UbiE family.

It catalyses the reaction a 2-demethylmenaquinol + S-adenosyl-L-methionine = a menaquinol + S-adenosyl-L-homocysteine + H(+). The catalysed reaction is a 2-methoxy-6-(all-trans-polyprenyl)benzene-1,4-diol + S-adenosyl-L-methionine = a 5-methoxy-2-methyl-3-(all-trans-polyprenyl)benzene-1,4-diol + S-adenosyl-L-homocysteine + H(+). It functions in the pathway quinol/quinone metabolism; menaquinone biosynthesis; menaquinol from 1,4-dihydroxy-2-naphthoate: step 2/2. The protein operates within cofactor biosynthesis; ubiquinone biosynthesis. Functionally, methyltransferase required for the conversion of demethylmenaquinol (DMKH2) to menaquinol (MKH2) and the conversion of 2-polyprenyl-6-methoxy-1,4-benzoquinol (DDMQH2) to 2-polyprenyl-3-methyl-6-methoxy-1,4-benzoquinol (DMQH2). The chain is Ubiquinone/menaquinone biosynthesis C-methyltransferase UbiE from Escherichia coli O9:H4 (strain HS).